We begin with the raw amino-acid sequence, 260 residues long: MQIGLVAQSPLDQFEIVPLIPMNIGNFYFSFTNSSLFMLLTLSFFLLLIHFITKKGGGNLVPNAWQSLVELLYDFVLNLVKEQIGGLSGNVKQMFFPCILVTFLFLLFCNLQGMIPYSFTVTSHFLITLALSFSIFIGITIVGFQRHGLHFFSFLLPAGVPLPLAPFLVLLELISYCFRALSLGIRLFANMMAGHSLVKILSGFAWTMLCMNEIFYFIGALGPLFIVLALTGLELGVAILQAYVFTILICIYLNDAINLH.

A run of 7 helical transmembrane segments spans residues 29–49 (FSFTNSSLFMLLTLSFFLLLI), 95–115 (FFPCILVTFLFLLFCNLQGMI), 124–144 (HFLITLALSFSIFIGITIVGF), 151–171 (FFSFLLPAGVPLPLAPFLVLL), 191–211 (MMAGHSLVKILSGFAWTMLCM), 213–233 (EIFYFIGALGPLFIVLALTGL), and 237–257 (VAILQAYVFTILICIYLNDAI).

It belongs to the ATPase A chain family. F-type ATPases have 2 components, CF(1) - the catalytic core - and CF(0) - the membrane proton channel. CF(1) has five subunits: alpha(3), beta(3), gamma(1), delta(1), epsilon(1). CF(0) has three main subunits: a, b and c.

Its subcellular location is the mitochondrion inner membrane. Its function is as follows. Mitochondrial membrane ATP synthase (F(1)F(0) ATP synthase or Complex V) produces ATP from ADP in the presence of a proton gradient across the membrane which is generated by electron transport complexes of the respiratory chain. F-type ATPases consist of two structural domains, F(1) - containing the extramembraneous catalytic core and F(0) - containing the membrane proton channel, linked together by a central stalk and a peripheral stalk. During catalysis, ATP synthesis in the catalytic domain of F(1) is coupled via a rotary mechanism of the central stalk subunits to proton translocation. Key component of the proton channel; it may play a direct role in the translocation of protons across the membrane. This is ATP synthase subunit a (ATP6) from Brassica napus (Rape).